Reading from the N-terminus, the 413-residue chain is Bestrophin homolog 13 (413 aa).

Transmembrane regions (helical) follow at residues 29-49 (LIYL…IDLI), 72-92 (SYTR…NVVA), 236-256 (LVYT…TLFG), and 272-292 (LVVP…FKVG).

It belongs to the anion channel-forming bestrophin (TC 1.A.46) family. Calcium-sensitive chloride channel subfamily. As to quaternary structure, forms oligomers.

It localises to the cell membrane. Forms chloride channels. In Caenorhabditis elegans, this protein is Bestrophin homolog 13 (best-13).